The primary structure comprises 659 residues: MTEKLSEQLQQLGEQNLEEKADYNMRYYKYLYKKSIEEPDKFWGELAEELITWYEPWKQAFVQEEGLLTKWFVGGKLNASYNAVDRHLNSHRKYKAAIFWESEKGEKKVVTYQDLFYEVNKWANALRELGVKKGDRVTIYMPLTPEGVIAKLAVARLGAIHSVVFAGFGAQALADRIADAGAKVVITADAYYRRGKLVELKKTVDEALNILGDKSPVQKVLVYKRTGTEIPFKEGRDVYFDEVGKYKYIEPVPVEATEPLFILYTSGTTGKPKGIVHSTGGYLVGTAVMLLWSYGLSQENDVLFNTSDIGWIVGHSYITYSPLVMGRSIVIYESAPDYPYPDKWAEMIEKYRATTFGTSATAIRTLMKYGEDYVKQHDLSSLRIIVTNGEPLNYAPWKWGLEVVGGGKVFMSHQWWQTETGGPNIGYIPGVVYLPMKSGPAVGFALPGNKVTVVNEEGKETKPRERGYLVMLPPFPPMMMIGMWNDPDNERLKKTYFSKFPGIYYPGDYAMIDEDGYIWVMGRADETIKVAAHRIGAGEVESIVTSHPAVAEAAAVGIPDPVKGEAVHLFVVLKVGYKPSPQLAREIQEHVRKYMGAIVTPEVHFVDKLPKTRSGKIMRRVIKAVMMGQSAGDITTLEDEASMDEIKKAVEEFKKSLSQ.

The active site involves D525. K616 carries the N6-acetyllysine modification.

The protein belongs to the ATP-dependent AMP-binding enzyme family.

The enzyme catalyses 3-hydroxypropanoate + ATP + CoA = 3-hydroxypropanoyl-CoA + AMP + diphosphate. Functionally, plays a role in the autotrophic CO(2) fixation pathway. Activates 3-hydroxypropionate to its CoA ester. Can also activate propionate, and to a lesser extent acrylate, acetate and butyrate. The chain is 3-hydroxypropionyl-coenzyme A synthetase from Sulfurisphaera tokodaii (strain DSM 16993 / JCM 10545 / NBRC 100140 / 7) (Sulfolobus tokodaii).